Reading from the N-terminus, the 217-residue chain is MSVTFEPGLLRAYFVAGSQDVPGQDLRDVLAKMLAAGITAFQFRDKATSTLTPEQRLALGRDLRAQCRVANVPFIVDDDVELALALDADGIHVGQSDQRVQQVIQAVAGRNIFVGLSCSTMAEVTAANAIAGIDYIGSGPIFPTISKADADPVVGTAGLQKLVAQSRVPVVAIGGVTVDSLPAIAETGAAGVAVITLLTHSHDVDADTAAMRQAFSK.

4-amino-2-methyl-5-(diphosphooxymethyl)pyrimidine-binding positions include 42–46 and Asp-77; that span reads QFRDK. Residues Asp-78 and Asp-97 each contribute to the Mg(2+) site. Ser-117 contacts 4-amino-2-methyl-5-(diphosphooxymethyl)pyrimidine. Residue 144–146 participates in 2-[(2R,5Z)-2-carboxy-4-methylthiazol-5(2H)-ylidene]ethyl phosphate binding; that stretch reads TIS. Residue Lys-147 participates in 4-amino-2-methyl-5-(diphosphooxymethyl)pyrimidine binding. Residues Gly-175 and 195–196 each bind 2-[(2R,5Z)-2-carboxy-4-methylthiazol-5(2H)-ylidene]ethyl phosphate; that span reads IT.

Belongs to the thiamine-phosphate synthase family. Mg(2+) is required as a cofactor.

The catalysed reaction is 2-[(2R,5Z)-2-carboxy-4-methylthiazol-5(2H)-ylidene]ethyl phosphate + 4-amino-2-methyl-5-(diphosphooxymethyl)pyrimidine + 2 H(+) = thiamine phosphate + CO2 + diphosphate. It carries out the reaction 2-(2-carboxy-4-methylthiazol-5-yl)ethyl phosphate + 4-amino-2-methyl-5-(diphosphooxymethyl)pyrimidine + 2 H(+) = thiamine phosphate + CO2 + diphosphate. The enzyme catalyses 4-methyl-5-(2-phosphooxyethyl)-thiazole + 4-amino-2-methyl-5-(diphosphooxymethyl)pyrimidine + H(+) = thiamine phosphate + diphosphate. It participates in cofactor biosynthesis; thiamine diphosphate biosynthesis; thiamine phosphate from 4-amino-2-methyl-5-diphosphomethylpyrimidine and 4-methyl-5-(2-phosphoethyl)-thiazole: step 1/1. In terms of biological role, condenses 4-methyl-5-(beta-hydroxyethyl)thiazole monophosphate (THZ-P) and 2-methyl-4-amino-5-hydroxymethyl pyrimidine pyrophosphate (HMP-PP) to form thiamine monophosphate (TMP). This chain is Thiamine-phosphate synthase, found in Levilactobacillus brevis (strain ATCC 367 / BCRC 12310 / CIP 105137 / JCM 1170 / LMG 11437 / NCIMB 947 / NCTC 947) (Lactobacillus brevis).